The following is a 187-amino-acid chain: UPF0398 protein SH1465 (187 aa).

This sequence belongs to the UPF0398 family.

This is UPF0398 protein SH1465 from Staphylococcus haemolyticus (strain JCSC1435).